The primary structure comprises 220 residues: Deoxyribose-phosphate aldolase (220 aa).

The active-site Proton donor/acceptor is the aspartate 89. Lysine 151 serves as the catalytic Schiff-base intermediate with acetaldehyde. The active-site Proton donor/acceptor is the lysine 180.

This sequence belongs to the DeoC/FbaB aldolase family. DeoC type 1 subfamily.

It localises to the cytoplasm. The enzyme catalyses 2-deoxy-D-ribose 5-phosphate = D-glyceraldehyde 3-phosphate + acetaldehyde. The protein operates within carbohydrate degradation; 2-deoxy-D-ribose 1-phosphate degradation; D-glyceraldehyde 3-phosphate and acetaldehyde from 2-deoxy-alpha-D-ribose 1-phosphate: step 2/2. Functionally, catalyzes a reversible aldol reaction between acetaldehyde and D-glyceraldehyde 3-phosphate to generate 2-deoxy-D-ribose 5-phosphate. This Streptococcus pneumoniae (strain Taiwan19F-14) protein is Deoxyribose-phosphate aldolase.